A 316-amino-acid polypeptide reads, in one-letter code: Apolipoprotein E (316 aa).

Positions 1 to 18 (MKALWAVLVVTLLAGCLA) are cleaved as a signal peptide. Tandem repeats lie at residues 76–97 (VLME…EQMG), 98–119 (PMAE…SRLG), 120–141 (ADME…TMLG), 142–163 (QSTE…KRLM), 164–185 (RDAE…EGAE), 186–207 (RGVG…QRTA), 208–229 (NLGA…ARIR), and 230–251 (GRLE…EQME). Residues 76–251 (VLMEDTMTEL…RLEEVREQME (176 aa)) are 8 X 22 AA approximate tandem repeats. Met-139 is modified (methionine sulfoxide). Ser-143 is modified (phosphoserine). Residues 154–164 (HLRKLRKRLMR) form an LDL and other lipoprotein receptors binding region. Heparin is bound at residue 158–161 (LRKR). The lipid-binding and lipoprotein association stretch occupies residues 206-286 (TANLGAGAAQ…GWFEPLVEDM (81 aa)). 225 to 232 (GARIRGRL) serves as a coordination point for heparin. Positions 262–316 (QQMRLQAEIFQTRLKGWFEPLVEDMQRQWANLMEKIQASVATNPIPPSSVPQESQ) are homooligomerization. A specificity for association with VLDL region spans residues 274-286 (RLKGWFEPLVEDM).

Belongs to the apolipoprotein A1/A4/E family. As to quaternary structure, homotetramer. May interact with ABCA1; functionally associated with ABCA1 in the biogenesis of HDLs. May interact with APP/A4 amyloid-beta peptide; the interaction is extremely stable in vitro but its physiological significance is unclear. May interact with MAPT. May interact with MAP2. In the cerebrospinal fluid, interacts with secreted SORL1. Interacts with PMEL; this allows the loading of PMEL luminal fragment on ILVs to induce fibril nucleation. Post-translationally, APOE exists as multiple glycosylated and sialylated glycoforms within cells and in plasma. The extent of glycosylation and sialylation are tissue and context specific. Glycated in plasma VLDL. In terms of processing, phosphorylated by FAM20C in the extracellular medium.

Its subcellular location is the secreted. It is found in the extracellular space. The protein resides in the extracellular matrix. The protein localises to the extracellular vesicle. It localises to the endosome. Its subcellular location is the multivesicular body. APOE is an apolipoprotein, a protein associating with lipid particles, that mainly functions in lipoprotein-mediated lipid transport between organs via the plasma and interstitial fluids. APOE is a core component of plasma lipoproteins and is involved in their production, conversion and clearance. Apolipoproteins are amphipathic molecules that interact both with lipids of the lipoprotein particle core and the aqueous environment of the plasma. As such, APOE associates with chylomicrons, chylomicron remnants, very low density lipoproteins (VLDL) and intermediate density lipoproteins (IDL) but shows a preferential binding to high-density lipoproteins (HDL). It also binds a wide range of cellular receptors including the LDL receptor/LDLR, the LDL receptor-related proteins LRP1, LRP2 and LRP8 and the very low-density lipoprotein receptor/VLDLR that mediate the cellular uptake of the APOE-containing lipoprotein particles. Finally, APOE also has a heparin-binding activity and binds heparan-sulfate proteoglycans on the surface of cells, a property that supports the capture and the receptor-mediated uptake of APOE-containing lipoproteins by cells. A main function of APOE is to mediate lipoprotein clearance through the uptake of chylomicrons, VLDLs, and HDLs by hepatocytes. APOE is also involved in the biosynthesis by the liver of VLDLs as well as their uptake by peripheral tissues ensuring the delivery of triglycerides and energy storage in muscle, heart and adipose tissues. By participating in the lipoprotein-mediated distribution of lipids among tissues, APOE plays a critical role in plasma and tissues lipid homeostasis. APOE is also involved in two steps of reverse cholesterol transport, the HDLs-mediated transport of cholesterol from peripheral tissues to the liver, and thereby plays an important role in cholesterol homeostasis. First, it is functionally associated with ABCA1 in the biogenesis of HDLs in tissues. Second, it is enriched in circulating HDLs and mediates their uptake by hepatocytes. APOE also plays an important role in lipid transport in the central nervous system, regulating neuron survival and sprouting. The polypeptide is Apolipoprotein E (APOE) (Microtus ochrogaster (Prairie vole)).